The chain runs to 318 residues: Phosphatidylglycerol--prolipoprotein diacylglyceryl transferase (318 aa).

Transmembrane regions (helical) follow at residues 23–43, 59–79, 98–118, 124–146, 192–212, 219–239, and 253–273; these read PLTI…GAWL, MDII…YHVI, IWEG…GAAI, GVRL…AMGR, FQPT…LLVF, LGAG…RFIF, and LRVN…VFLI. Residue arginine 146 coordinates a 1,2-diacyl-sn-glycero-3-phospho-(1'-sn-glycerol). The segment covering 293-312 has biased composition (basic and acidic residues); sequence FDTRANGHDPEKHDETDGKG. Positions 293 to 318 are disordered; the sequence is FDTRANGHDPEKHDETDGKGNRHHVP.

This sequence belongs to the Lgt family.

The protein resides in the cell membrane. It catalyses the reaction L-cysteinyl-[prolipoprotein] + a 1,2-diacyl-sn-glycero-3-phospho-(1'-sn-glycerol) = an S-1,2-diacyl-sn-glyceryl-L-cysteinyl-[prolipoprotein] + sn-glycerol 1-phosphate + H(+). The protein operates within protein modification; lipoprotein biosynthesis (diacylglyceryl transfer). Catalyzes the transfer of the diacylglyceryl group from phosphatidylglycerol to the sulfhydryl group of the N-terminal cysteine of a prolipoprotein, the first step in the formation of mature lipoproteins. This Paenarthrobacter aurescens (strain TC1) protein is Phosphatidylglycerol--prolipoprotein diacylglyceryl transferase.